A 338-amino-acid chain; its full sequence is Heat-inducible transcription repressor HrcA (338 aa).

It belongs to the HrcA family.

Functionally, negative regulator of class I heat shock genes (grpE-dnaK-dnaJ and groELS operons). Prevents heat-shock induction of these operons. This Bacillus cereus (strain AH187) protein is Heat-inducible transcription repressor HrcA.